A 217-amino-acid chain; its full sequence is Thymidylate kinase (217 aa).

Residue 11-18 (GLEGAGKS) coordinates ATP.

This sequence belongs to the thymidylate kinase family.

It carries out the reaction dTMP + ATP = dTDP + ADP. Phosphorylation of dTMP to form dTDP in both de novo and salvage pathways of dTTP synthesis. This is Thymidylate kinase from Alkalilimnicola ehrlichii (strain ATCC BAA-1101 / DSM 17681 / MLHE-1).